Consider the following 464-residue polypeptide: L-cysteine:1D-myo-inositol 2-amino-2-deoxy-alpha-D-glucopyranoside ligase (464 aa).

C67 serves as a coordination point for Zn(2+). Residues 67-70, T82, and 105-107 contribute to the L-cysteinyl-5'-AMP site; these read CGIT and NVT. Residues 69–79 carry the 'HIGH' region motif; the sequence is ITPYDATHLGH. The 'ERGGDP' region motif lies at 207 to 212; sequence ERGGDP. W247 lines the L-cysteinyl-5'-AMP pocket. A Zn(2+)-binding site is contributed by C251. 269–271 is a binding site for L-cysteinyl-5'-AMP; it reads GTD. A Zn(2+)-binding site is contributed by H276. V303 contributes to the L-cysteinyl-5'-AMP binding site. Positions 309-313 match the 'KMSKS' region motif; it reads KMSKS. Positions 410 to 435 are disordered; it reads AGGSAGAGPDPTHQGGPVRGSGGDVP.

The protein belongs to the class-I aminoacyl-tRNA synthetase family. MshC subfamily. Monomer. It depends on Zn(2+) as a cofactor.

It carries out the reaction 1D-myo-inositol 2-amino-2-deoxy-alpha-D-glucopyranoside + L-cysteine + ATP = 1D-myo-inositol 2-(L-cysteinylamino)-2-deoxy-alpha-D-glucopyranoside + AMP + diphosphate + H(+). In terms of biological role, catalyzes the ATP-dependent condensation of GlcN-Ins and L-cysteine to form L-Cys-GlcN-Ins. This Frankia casuarinae (strain DSM 45818 / CECT 9043 / HFP020203 / CcI3) protein is L-cysteine:1D-myo-inositol 2-amino-2-deoxy-alpha-D-glucopyranoside ligase.